Reading from the N-terminus, the 371-residue chain is N-acetyldiaminopimelate deacetylase (371 aa).

Asp-68 is a catalytic residue. Glu-127 serves as the catalytic Proton acceptor.

The protein belongs to the peptidase M20A family. N-acetyldiaminopimelate deacetylase subfamily.

The catalysed reaction is N-acetyl-(2S,6S)-2,6-diaminopimelate + H2O = (2S,6S)-2,6-diaminopimelate + acetate. It functions in the pathway amino-acid biosynthesis; L-lysine biosynthesis via DAP pathway; LL-2,6-diaminopimelate from (S)-tetrahydrodipicolinate (acetylase route): step 3/3. In terms of biological role, catalyzes the conversion of N-acetyl-diaminopimelate to diaminopimelate and acetate. In Oceanobacillus iheyensis (strain DSM 14371 / CIP 107618 / JCM 11309 / KCTC 3954 / HTE831), this protein is N-acetyldiaminopimelate deacetylase.